The chain runs to 237 residues: Urease subunit alpha (237 aa).

Residues 1-102 (MKLTPKELDK…LVTIHTPVED (102 aa)) form a urease gamma region. A urease beta region spans residues 103-237 (NGKLAPGEVF…CGCEATKDKQ (135 aa)).

This sequence in the N-terminal section; belongs to the urease gamma subunit family. The protein in the C-terminal section; belongs to the urease beta subunit family. In terms of assembly, heterohexamer of 3 UreA (alpha) and 3 UreB (beta) subunits.

The protein localises to the cytoplasm. It catalyses the reaction urea + 2 H2O + H(+) = hydrogencarbonate + 2 NH4(+). The protein operates within nitrogen metabolism; urea degradation; CO(2) and NH(3) from urea (urease route): step 1/1. This is Urease subunit alpha from Helicobacter felis.